The chain runs to 383 residues: MNTQLPSFIALYRALIATPSISANDGALDQSNERLITLLAGWLSDLGLRVEMQPVPNTRNKFNLLANYGEGAGGLMLAGHTDTVPFDEGRWTRDPFTLSEQDNRLYGLGTADMKGLFAFIIDTLRDIELHKLNKPLYILATADEETSMAGARYFAASTALRPDCCIIGEPTSLKPIRAHKGHLSEAIRITGQSGHSSDPARGVNAIEIMHNAIGHLLTLRNTLQQRYHNPAFNIPYPTMNLGHIHGGDAANRICACCELHLDMRPLPGMTLNDLNELLNQALTPIAAQWSGRLRIEHLHPPIPGYECPRHAPLVQAIEQLLGERAEAVNYCTEAPFLQEVCPTLVLGPGSIEQAHQPDEYLSTDFIVPTRTLLTQLIHHFCQR.

His80 is a binding site for Zn(2+). Asp82 is an active-site residue. Zn(2+) is bound at residue Asp112. Residue Glu144 is part of the active site. The Zn(2+) site is built by Glu145, Glu169, and His355.

This sequence belongs to the peptidase M20A family. ArgE subfamily. Homodimer. Requires Zn(2+) as cofactor. It depends on Co(2+) as a cofactor. The cofactor is glutathione.

Its subcellular location is the cytoplasm. It catalyses the reaction N(2)-acetyl-L-ornithine + H2O = L-ornithine + acetate. The protein operates within amino-acid biosynthesis; L-arginine biosynthesis; L-ornithine from N(2)-acetyl-L-ornithine (linear): step 1/1. Functionally, catalyzes the hydrolysis of the amide bond of N(2)-acetylated L-amino acids. Cleaves the acetyl group from N-acetyl-L-ornithine to form L-ornithine, an intermediate in L-arginine biosynthesis pathway, and a branchpoint in the synthesis of polyamines. This Edwardsiella ictaluri (strain 93-146) protein is Acetylornithine deacetylase.